Here is a 622-residue protein sequence, read N- to C-terminus: Chaperone protein HscA homolog (622 aa).

It belongs to the heat shock protein 70 family.

In terms of biological role, chaperone involved in the maturation of iron-sulfur cluster-containing proteins. Has a low intrinsic ATPase activity which is markedly stimulated by HscB. This Verminephrobacter eiseniae (strain EF01-2) protein is Chaperone protein HscA homolog.